We begin with the raw amino-acid sequence, 387 residues long: Exodeoxyribonuclease 7 large subunit (387 aa).

This sequence belongs to the XseA family. Heterooligomer composed of large and small subunits.

The protein resides in the cytoplasm. It carries out the reaction Exonucleolytic cleavage in either 5'- to 3'- or 3'- to 5'-direction to yield nucleoside 5'-phosphates.. Bidirectionally degrades single-stranded DNA into large acid-insoluble oligonucleotides, which are then degraded further into small acid-soluble oligonucleotides. The protein is Exodeoxyribonuclease 7 large subunit of Campylobacter jejuni subsp. jejuni serotype O:23/36 (strain 81-176).